Reading from the N-terminus, the 383-residue chain is ATP phosphoribosyltransferase regulatory subunit (383 aa).

Belongs to the class-II aminoacyl-tRNA synthetase family. HisZ subfamily. In terms of assembly, heteromultimer composed of HisG and HisZ subunits.

It is found in the cytoplasm. Its pathway is amino-acid biosynthesis; L-histidine biosynthesis; L-histidine from 5-phospho-alpha-D-ribose 1-diphosphate: step 1/9. Required for the first step of histidine biosynthesis. May allow the feedback regulation of ATP phosphoribosyltransferase activity by histidine. This chain is ATP phosphoribosyltransferase regulatory subunit, found in Desulfitobacterium hafniense (strain DSM 10664 / DCB-2).